A 418-amino-acid chain; its full sequence is Serum response factor homolog A (418 aa).

4 disordered regions span residues 14-67, 144-170, 301-351, and 388-418; these read LGNV…GKKA, CLNT…LLQQ, RLGK…NNNS, and SSSS…FPPC. 2 stretches are compositionally biased toward low complexity: residues 22–39 and 51–61; these read PSSP…PTST and TSEPSSPSTGE. Positions 67–127 constitute an MADS-box domain; the sequence is AGRRKIKIEF…GHVYTFATAK (61 aa). Composition is skewed to low complexity over residues 150–170, 306–351, and 388–399; these read NPNS…LLQQ, NNNN…NNNS, and SSSSASSSPASP. Polar residues predominate over residues 400–418; that stretch reads NQFNYSNHSMPLNNQFPPC.

It localises to the nucleus. Functionally, required for proper slug migration, spore differentiation and stalk differentiation (under nonbuffered conditions). Could be involved in late events of spore maturation necessary for spore stability. The protein is Serum response factor homolog A (srfA) of Dictyostelium discoideum (Social amoeba).